The sequence spans 201 residues: Sec-independent protein translocase protein TatB (201 aa).

The helical transmembrane segment at 1-21 (MLDLGWSEILVIAVVLIVVVG) threads the bilayer. A disordered region spans residues 96 to 201 (LSEAAKAKPA…RRKKTAGTAP (106 aa)). 2 stretches are compositionally biased toward low complexity: residues 102–114 (AKPA…AADS) and 159–187 (TSAK…APAK). The span at 189 to 201 (PSPRRKKTAGTAP) shows a compositional bias: basic residues.

This sequence belongs to the TatB family. As to quaternary structure, the Tat system comprises two distinct complexes: a TatABC complex, containing multiple copies of TatA, TatB and TatC subunits, and a separate TatA complex, containing only TatA subunits. Substrates initially bind to the TatABC complex, which probably triggers association of the separate TatA complex to form the active translocon.

Its subcellular location is the cell inner membrane. Part of the twin-arginine translocation (Tat) system that transports large folded proteins containing a characteristic twin-arginine motif in their signal peptide across membranes. Together with TatC, TatB is part of a receptor directly interacting with Tat signal peptides. TatB may form an oligomeric binding site that transiently accommodates folded Tat precursor proteins before their translocation. The protein is Sec-independent protein translocase protein TatB of Chelativorans sp. (strain BNC1).